The following is a 69-amino-acid chain: Cytoinsectotoxin-2a (69 aa).

This sequence belongs to the cationic peptide 06 (cytoinsectotoxin) family. Expressed by the venom gland.

The protein resides in the secreted. Insecticidal and antimicrobial peptide. Has insecticidal activity against larvae of flesh fly S.carnaria. Has antibacterial activity against Gram-positive bacterium B.subtilis B-501 (MIC=1.25 uM) and Gram-negative bacterium E.coli DH5alpha (MIC=2.5 uM). This Lachesana tarabaevi (Spider) protein is Cytoinsectotoxin-2a.